The following is a 348-amino-acid chain: Mycothiol acetyltransferase (348 aa).

N-acetyltransferase domains are found at residues 12-156 (TSMR…VDVT) and 169-330 (VAVR…HGTP). 1D-myo-inositol 2-(L-cysteinylamino)-2-deoxy-alpha-D-glucopyranoside is bound at residue Glu-44. 91 to 93 (LVV) contributes to the acetyl-CoA binding site. The 1D-myo-inositol 2-(L-cysteinylamino)-2-deoxy-alpha-D-glucopyranoside site is built by Glu-196, Lys-235, and Glu-253. Acetyl-CoA-binding positions include 257–259 (VGV) and 264–270 (QGLGMGR). Residue Tyr-291 coordinates 1D-myo-inositol 2-(L-cysteinylamino)-2-deoxy-alpha-D-glucopyranoside. 296–301 (NTVAVH) contributes to the acetyl-CoA binding site. The interval 320–348 (PPAGSPAHGTPLVRVTDTPSSPGDATMGS) is disordered. Polar residues predominate over residues 336–348 (DTPSSPGDATMGS).

The protein belongs to the acetyltransferase family. MshD subfamily. As to quaternary structure, monomer.

It carries out the reaction 1D-myo-inositol 2-(L-cysteinylamino)-2-deoxy-alpha-D-glucopyranoside + acetyl-CoA = mycothiol + CoA + H(+). Functionally, catalyzes the transfer of acetyl from acetyl-CoA to desacetylmycothiol (Cys-GlcN-Ins) to form mycothiol. The polypeptide is Mycothiol acetyltransferase (Cellulomonas flavigena (strain ATCC 482 / DSM 20109 / BCRC 11376 / JCM 18109 / NBRC 3775 / NCIMB 8073 / NRS 134)).